Reading from the N-terminus, the 467-residue chain is Keratin, type 1 cytoskeletal 11 (467 aa).

Positions 1–100 are head; sequence MSYSSFSIAQ…GGTDFLLGTS (100 aa). Positions 12 to 30 are enriched in low complexity; it reads SRVPSLSGTRSSSSYSLKS. The segment at 12–32 is disordered; it reads SRVPSLSGTRSSSSYSLKSDL. The interval 101–137 is coil 1A; it reads GKEAMQNLNDRLADYLARVRSLEDRNRELEQKIREWY. Positions 101-413 constitute an IF rod domain; sequence GKEAMQNLND…TLLEGDAGRS (313 aa). A linker 1 region spans residues 138-156; it reads EKQGAGTKRKDFSHYFKII. A coil 1B region spans residues 157–248; sequence ADLQNQINAG…SHDEDMKALR (92 aa). The segment at 249-268 is linker 12; it reads SQLGGQVNVEVDAAPAEDLT. Residues 269-416 are coil 2; the sequence is KKLEIIRQRY…EGDAGRSHSS (148 aa). A disordered region spans residues 409–430; that stretch reads DAGRSHSSSHLSSTVSKDKVPV. The interval 417–463 is tail; it reads SHLSSTVSKDKVPVSSPNVITKVRTIVEEKINGQVISKKEYEGSPDQ.

This sequence belongs to the intermediate filament family. Heterotetramer of two type I and two type II keratins. In terms of tissue distribution, expressed in the outermost cell layers of skin epidermis (at protein level).

This is Keratin, type 1 cytoskeletal 11 from Protopterus aethiopicus (Marbled lungfish).